The chain runs to 661 residues: MGDQKRSFINVMIGDFVAVPTKFANFIRGQISEVVKLEVPNGKTYDVQVAKEHNELVLRSGWGAFARDYELKQCDILVFAYSGSSRFKVRIFNPSGCEKELSCVMMNNTPCGHEGSMSYHDNHLQSPSESSSFFNISLPPHSPFQELSGVDSTSLLVSDPPNMQQFCLRCSWTNPKRLAKPSLAIASLSHQHLAFDKTRCMFILKIENDTLKTILKMFAKNVQGLISGVAKLEVPDGKTYDVEISKEHNELVFRSGWEVFAIAYELEQGDILAFGYSGNSHFKVQIFNPSNCEKELSCVVMNRSISDDNHRQSPRRERMNKPSTTCMDCITNHYWLHMDDRERYFFKVMMSVSDIKDELAIPKKFAANVRGKIPEQVRLEVSDDVPSSEDIKDPMSSGGLQKSKKSCYVLPMLYNMTSAQESEVLALEKKIQPQIPLYITAMDKTSVASGSLVFCKDYAVRYLLDQNRTIKLCQSGGSKTWDISLDMDTDDLYALSTGWLDFFRCNLLQEGDICVFEASKSKRGVALTFHPFKESHCPKSSEYTLSTKSPTRRVPKRDYFATNLTNLTDQQERKCFSVKYASKYLPHKDQNMRLRLPETKYKCKAALHIDTSTNLHKLLKGWGKFVNDNKLEIHDICLFQLMKNKKKLTMTVHIIRKGECS.

DNA-binding regions (TF-B3) lie at residues 2-95, 197-290, 437-535, and 562-658; these read GDQK…FNPS, KTRC…FNPS, LYIT…FKES, and TNLT…IRKG.

The protein localises to the nucleus. In Oryza sativa subsp. japonica (Rice), this protein is B3 domain-containing protein Os12g0591400.